Here is a 460-residue protein sequence, read N- to C-terminus: Cysteine--tRNA ligase (460 aa).

Cys-28 contributes to the Zn(2+) binding site. A 'HIGH' region motif is present at residues Met-30–His-40. Zn(2+)-binding residues include Cys-209, His-234, and Glu-238. Residues Lys-266–Ser-270 carry the 'KMSKS' region motif. Lys-269 provides a ligand contact to ATP.

The protein belongs to the class-I aminoacyl-tRNA synthetase family. In terms of assembly, monomer. Zn(2+) serves as cofactor.

It is found in the cytoplasm. It catalyses the reaction tRNA(Cys) + L-cysteine + ATP = L-cysteinyl-tRNA(Cys) + AMP + diphosphate. This is Cysteine--tRNA ligase from Pseudomonas paraeruginosa (strain DSM 24068 / PA7) (Pseudomonas aeruginosa (strain PA7)).